A 290-amino-acid polypeptide reads, in one-letter code: 4-hydroxy-tetrahydrodipicolinate synthase (290 aa).

T44 is a pyruvate binding site. The active-site Proton donor/acceptor is the Y132. The Schiff-base intermediate with substrate role is filled by K160. Pyruvate is bound at residue I202.

The protein belongs to the DapA family. Homotetramer; dimer of dimers.

The protein localises to the cytoplasm. The catalysed reaction is L-aspartate 4-semialdehyde + pyruvate = (2S,4S)-4-hydroxy-2,3,4,5-tetrahydrodipicolinate + H2O + H(+). It functions in the pathway amino-acid biosynthesis; L-lysine biosynthesis via DAP pathway; (S)-tetrahydrodipicolinate from L-aspartate: step 3/4. Functionally, catalyzes the condensation of (S)-aspartate-beta-semialdehyde [(S)-ASA] and pyruvate to 4-hydroxy-tetrahydrodipicolinate (HTPA). The polypeptide is 4-hydroxy-tetrahydrodipicolinate synthase (Geotalea uraniireducens (strain Rf4) (Geobacter uraniireducens)).